Consider the following 129-residue polypeptide: MKTLQFFFLFCCWKAICCNSCELTNITIAIEKEECRFCISINTTWCAGYCYTRDLVYKDPARPKIQKTCTFKELVYETVRVPGCAHHADSLYTYPVATQCHCGKCDSDSTDCTVRGLGPSYCSFGEMKE.

Positions 1–18 (MKTLQFFFLFCCWKAICC) are cleaved as a signal peptide. Cystine bridges form between C21-C69, C35-C84, C38-C122, C46-C100, C50-C102, and C105-C112. N25 and N42 each carry an N-linked (GlcNAc...) asparagine glycan.

The protein belongs to the glycoprotein hormones subunit beta family. Heterodimer. The active follitropin is a heterodimer composed of an alpha chain/CGA shared with other hormones and a unique beta chain/FSHB shown here.

It is found in the secreted. Functionally, together with the alpha chain CGA constitutes follitropin, the follicle-stimulating hormone, and provides its biological specificity to the hormone heterodimer. Binds FSHR, a G protein-coupled receptor, on target cells to activate downstream signaling pathways. Follitropin is involved in follicle development and spermatogenesis in reproductive organs. This Homo sapiens (Human) protein is Follitropin subunit beta (FSHB).